A 127-amino-acid chain; its full sequence is DNA-directed RNA polymerase subunit omega (127 aa).

The protein belongs to the RNA polymerase subunit omega family. In terms of assembly, the RNAP catalytic core consists of 2 alpha, 1 beta, 1 beta' and 1 omega subunit. When a sigma factor is associated with the core the holoenzyme is formed, which can initiate transcription.

It carries out the reaction RNA(n) + a ribonucleoside 5'-triphosphate = RNA(n+1) + diphosphate. Its function is as follows. Promotes RNA polymerase assembly. Latches the N- and C-terminal regions of the beta' subunit thereby facilitating its interaction with the beta and alpha subunits. In Rickettsia africae (strain ESF-5), this protein is DNA-directed RNA polymerase subunit omega.